The chain runs to 309 residues: tRNA hydroxylation protein P2 (309 aa).

It belongs to the peptidase U32 family.

Functionally, involved in prephenate-dependent formation of 5-hydroxyuridine (ho5U) modification at position 34 in tRNAs, the first step in 5-methoxyuridine (mo5U) biosynthesis. This Bacillus subtilis (strain 168) protein is tRNA hydroxylation protein P2.